The chain runs to 344 residues: Serpentine receptor class alpha-27 (344 aa).

7 helical membrane-spanning segments follow: residues 28 to 48 (SIWM…TFYL), 67 to 87 (QILL…FLEI), 128 to 148 (GLLS…TVYV), 157 to 177 (MLIT…YGGV), 203 to 223 (AIFW…LLNI), 252 to 272 (ICSV…ALAI), and 287 to 307 (INIQ…VLIY).

The protein belongs to the nematode receptor-like protein sra family.

Its subcellular location is the membrane. In Caenorhabditis elegans, this protein is Serpentine receptor class alpha-27 (sra-27).